Reading from the N-terminus, the 669-residue chain is Heat shock 70 kDa protein BIP3 (669 aa).

A signal peptide spans 1 to 32 (MARGATWTRRLHLHGLFLAVLLLLTLPAGSTA). N-linked (GlcNAc...) asparagine glycosylation occurs at N423. The tract at residues 646–669 (AVYQRSGGSRRDGDGGGDDDHDEL) is disordered. Residues 660 to 669 (GGGDDDHDEL) show a composition bias toward acidic residues. Residues 666 to 669 (HDEL) carry the Prevents secretion from ER motif.

The protein belongs to the heat shock protein 70 family.

It localises to the endoplasmic reticulum. Its function is as follows. Functions as a chaperone during endoplasmic reticulum (ER) stress response. The sequence is that of Heat shock 70 kDa protein BIP3 from Oryza sativa subsp. japonica (Rice).